Here is a 185-residue protein sequence, read N- to C-terminus: MIDDTLLEAEEKMEKAVSVAREDFANIRTGRITPAVFSKILVDYYGAPTPVQQLASFHIPEPRMVIITPYDKSSLGAIEKAVRDSDLGVNPSNDGTIIRCVFPELSEQRRRDLVKVARTKAEEARVSIRNVRRHAKDTIDRIVRDGDAGEDEGRRGEKDLDEATHRYVGQVDELLRLKESDLLSV.

It belongs to the RRF family.

The protein resides in the cytoplasm. In terms of biological role, responsible for the release of ribosomes from messenger RNA at the termination of protein biosynthesis. May increase the efficiency of translation by recycling ribosomes from one round of translation to another. The polypeptide is Ribosome-recycling factor (Frankia casuarinae (strain DSM 45818 / CECT 9043 / HFP020203 / CcI3)).